A 236-amino-acid polypeptide reads, in one-letter code: Small ribosomal subunit protein uS2c (236 aa).

The protein belongs to the universal ribosomal protein uS2 family.

The protein localises to the plastid. It localises to the chloroplast. The protein is Small ribosomal subunit protein uS2c (rps2) of Calycanthus floridus var. glaucus (Eastern sweetshrub).